A 92-amino-acid polypeptide reads, in one-letter code: Long neurotoxin 1 (92 aa).

The first 21 residues, 1 to 21 (MKTLLLTLVVVTIVCLDLGYT), serve as a signal peptide directing secretion. 5 disulfides stabilise this stretch: cysteine 24/cysteine 42, cysteine 35/cysteine 63, cysteine 48/cysteine 52, cysteine 67/cysteine 79, and cysteine 80/cysteine 85.

The protein belongs to the three-finger toxin family. Long-chain subfamily. Type II alpha-neurotoxin sub-subfamily. As to expression, expressed by the venom gland.

It localises to the secreted. In terms of biological role, binds with high affinity to muscular (alpha-1/CHRNA1) and neuronal (alpha-7/CHRNA7) nicotinic acetylcholine receptor (nAChR) and inhibits acetylcholine from binding to the receptor, thereby impairing neuromuscular and neuronal transmission. The chain is Long neurotoxin 1 from Oxyuranus microlepidotus (Inland taipan).